Consider the following 97-residue polypeptide: Small ribosomal subunit protein bS6 (97 aa).

This sequence belongs to the bacterial ribosomal protein bS6 family.

Binds together with bS18 to 16S ribosomal RNA. This chain is Small ribosomal subunit protein bS6, found in Syntrophomonas wolfei subsp. wolfei (strain DSM 2245B / Goettingen).